An 842-amino-acid chain; its full sequence is Microcephalin (842 aa).

Positions 1-93 constitute a BRCT 1 domain; sequence MAAPILKDVV…AHIDESLFPA (93 aa). Phosphoserine occurs at positions 279, 287, 296, and 333. Threonine 335 bears the Phosphothreonine mark. Over residues 346–359 the composition is skewed to basic residues; it reads HSRPRSSSVKRKRV. Disordered regions lie at residues 346 to 375, 418 to 443, and 563 to 624; these read HSRPRSSSVKRKRVSYGFHSPPKEKCKRKR, PDNLKERNSENLPPKSQLPSNPAQFS, and VGLK…PTRR. Composition is skewed to polar residues over residues 434-443 and 566-582; these read QLPSNPAQFS and KSTQDKGTTSKISNSSE. Positions 586-608 are enriched in basic and acidic residues; sequence PSEHEPRSVVDCNVERSAEEKEN. 2 BRCT domains span residues 647–737 and 758–840; these read SGKG…PFEL and YRGT…NYLL.

Interacts with CDC27 and maybe other components of the APC/C complex. Interacts with histone variant H2AX under DNA damage conditions.

Its subcellular location is the cytoplasm. It localises to the cytoskeleton. It is found in the microtubule organizing center. The protein resides in the centrosome. Its function is as follows. Implicated in chromosome condensation and DNA damage induced cellular responses. May play a role in neurogenesis and regulation of the size of the cerebral cortex. The polypeptide is Microcephalin (Macaca fascicularis (Crab-eating macaque)).